The chain runs to 117 residues: Fluoride-specific ion channel FluC 1 (117 aa).

Helical transmembrane passes span 1 to 21 (MIHI…RAWL), 35 to 55 (IATL…YGIA), 60 to 80 (LFSL…STLS), and 97 to 117 (FSYS…GYSI). Na(+) is bound by residues G71 and T74.

It belongs to the fluoride channel Fluc/FEX (TC 1.A.43) family.

The protein resides in the cell membrane. The catalysed reaction is fluoride(in) = fluoride(out). Its activity is regulated as follows. Na(+) is not transported, but it plays an essential structural role and its presence is essential for fluoride channel function. Functionally, fluoride-specific ion channel. Important for reducing fluoride concentration in the cell, thus reducing its toxicity. This is Fluoride-specific ion channel FluC 1 from Staphylococcus haemolyticus (strain JCSC1435).